The following is a 218-amino-acid chain: Thiopurine S-methyltransferase (218 aa).

4 residues coordinate S-adenosyl-L-methionine: W10, L45, E66, and R123.

This sequence belongs to the class I-like SAM-binding methyltransferase superfamily. TPMT family.

The protein resides in the cytoplasm. The catalysed reaction is S-adenosyl-L-methionine + a thiopurine = S-adenosyl-L-homocysteine + a thiopurine S-methylether.. This is Thiopurine S-methyltransferase from Shewanella oneidensis (strain ATCC 700550 / JCM 31522 / CIP 106686 / LMG 19005 / NCIMB 14063 / MR-1).